A 462-amino-acid polypeptide reads, in one-letter code: Glycine--tRNA ligase (462 aa).

Substrate is bound by residues arginine 98 and glutamate 174. ATP is bound by residues arginine 206–glutamate 208, phenylalanine 216–phenylalanine 221, glutamate 290–leucine 291, and glycine 334–arginine 337. Phenylalanine 221–glutamate 225 provides a ligand contact to substrate. Position 330-334 (glutamate 330–glycine 334) interacts with substrate.

This sequence belongs to the class-II aminoacyl-tRNA synthetase family. As to quaternary structure, homodimer.

Its subcellular location is the cytoplasm. It catalyses the reaction tRNA(Gly) + glycine + ATP = glycyl-tRNA(Gly) + AMP + diphosphate. Its function is as follows. Catalyzes the attachment of glycine to tRNA(Gly). The protein is Glycine--tRNA ligase of Lachnoclostridium phytofermentans (strain ATCC 700394 / DSM 18823 / ISDg) (Clostridium phytofermentans).